We begin with the raw amino-acid sequence, 353 residues long: tRNA-specific 2-thiouridylase MnmA (353 aa).

Residues 7–14 (GLSGGVDS) and leucine 33 contribute to the ATP site. The active-site Nucleophile is cysteine 94. A disulfide bond links cysteine 94 and cysteine 193. Glycine 119 serves as a coordination point for ATP. Residues 143 to 145 (KDQ) form an interaction with tRNA region. The Cysteine persulfide intermediate role is filled by cysteine 193. Residues 298–299 (RY) form an interaction with tRNA region.

Belongs to the MnmA/TRMU family.

The protein resides in the cytoplasm. The catalysed reaction is S-sulfanyl-L-cysteinyl-[protein] + uridine(34) in tRNA + AH2 + ATP = 2-thiouridine(34) in tRNA + L-cysteinyl-[protein] + A + AMP + diphosphate + H(+). In terms of biological role, catalyzes the 2-thiolation of uridine at the wobble position (U34) of tRNA, leading to the formation of s(2)U34. The sequence is that of tRNA-specific 2-thiouridylase MnmA from Picosynechococcus sp. (strain ATCC 27264 / PCC 7002 / PR-6) (Agmenellum quadruplicatum).